The primary structure comprises 159 residues: Prs ADP-ribosylating antitoxin (159 aa).

Positions 99–159 (EDMVEESGET…LAQIQSGAFA (61 aa)) are sufficient to neutralize toxin.

Belongs to the MbcA/ParS/Xre antitoxin family. In terms of assembly, forms heterotetrameric ParS(2)-ParT(2) complexes. The 2 antitoxin fragments do not make contact in the crystal structure.

Its function is as follows. Antitoxin component of a type II toxin-antitoxin (TA) system. Neutralizes the bacteriostatic effect of cognate toxin ParT by inserting into its active site. This chain is Prs ADP-ribosylating antitoxin, found in Sphingobium sp. (strain YBL2).